The chain runs to 568 residues: 2-succinyl-5-enolpyruvyl-6-hydroxy-3-cyclohexene-1-carboxylate synthase (568 aa).

Belongs to the TPP enzyme family. MenD subfamily. In terms of assembly, homodimer. It depends on Mg(2+) as a cofactor. The cofactor is Mn(2+). Thiamine diphosphate serves as cofactor.

The catalysed reaction is isochorismate + 2-oxoglutarate + H(+) = 5-enolpyruvoyl-6-hydroxy-2-succinyl-cyclohex-3-ene-1-carboxylate + CO2. It functions in the pathway quinol/quinone metabolism; 1,4-dihydroxy-2-naphthoate biosynthesis; 1,4-dihydroxy-2-naphthoate from chorismate: step 2/7. Its pathway is quinol/quinone metabolism; menaquinone biosynthesis. In terms of biological role, catalyzes the thiamine diphosphate-dependent decarboxylation of 2-oxoglutarate and the subsequent addition of the resulting succinic semialdehyde-thiamine pyrophosphate anion to isochorismate to yield 2-succinyl-5-enolpyruvyl-6-hydroxy-3-cyclohexene-1-carboxylate (SEPHCHC). The chain is 2-succinyl-5-enolpyruvyl-6-hydroxy-3-cyclohexene-1-carboxylate synthase from Haemophilus influenzae (strain PittGG).